The sequence spans 227 residues: Cytochrome c oxidase subunit 2 (227 aa).

Topologically, residues 1–14 (MAYPFQLGLQDATS) are mitochondrial intermembrane. The chain crosses the membrane as a helical span at residues 15–45 (PIMEELTNFHDHTLMIVFLISSLVLYIISLM). Topologically, residues 46–59 (LTTKLTHTSTMDAQ) are mitochondrial matrix. Residues 60–87 (EVETIWTILPAAILVLIALPSLRILYMM) form a helical membrane-spanning segment. Topologically, residues 88-227 (DEINNPVLTV…HFENWSASMV (140 aa)) are mitochondrial intermembrane. Residues histidine 161, cysteine 196, glutamate 198, cysteine 200, histidine 204, and methionine 207 each coordinate Cu cation. Mg(2+) is bound at residue glutamate 198.

It belongs to the cytochrome c oxidase subunit 2 family. Component of the cytochrome c oxidase (complex IV, CIV), a multisubunit enzyme composed of 14 subunits. The complex is composed of a catalytic core of 3 subunits MT-CO1, MT-CO2 and MT-CO3, encoded in the mitochondrial DNA, and 11 supernumerary subunits COX4I, COX5A, COX5B, COX6A, COX6B, COX6C, COX7A, COX7B, COX7C, COX8 and NDUFA4, which are encoded in the nuclear genome. The complex exists as a monomer or a dimer and forms supercomplexes (SCs) in the inner mitochondrial membrane with NADH-ubiquinone oxidoreductase (complex I, CI) and ubiquinol-cytochrome c oxidoreductase (cytochrome b-c1 complex, complex III, CIII), resulting in different assemblies (supercomplex SCI(1)III(2)IV(1) and megacomplex MCI(2)III(2)IV(2)). Found in a complex with TMEM177, COA6, COX18, COX20, SCO1 and SCO2. Interacts with TMEM177 in a COX20-dependent manner. Interacts with COX20. Interacts with COX16. Cu cation is required as a cofactor.

It is found in the mitochondrion inner membrane. The enzyme catalyses 4 Fe(II)-[cytochrome c] + O2 + 8 H(+)(in) = 4 Fe(III)-[cytochrome c] + 2 H2O + 4 H(+)(out). In terms of biological role, component of the cytochrome c oxidase, the last enzyme in the mitochondrial electron transport chain which drives oxidative phosphorylation. The respiratory chain contains 3 multisubunit complexes succinate dehydrogenase (complex II, CII), ubiquinol-cytochrome c oxidoreductase (cytochrome b-c1 complex, complex III, CIII) and cytochrome c oxidase (complex IV, CIV), that cooperate to transfer electrons derived from NADH and succinate to molecular oxygen, creating an electrochemical gradient over the inner membrane that drives transmembrane transport and the ATP synthase. Cytochrome c oxidase is the component of the respiratory chain that catalyzes the reduction of oxygen to water. Electrons originating from reduced cytochrome c in the intermembrane space (IMS) are transferred via the dinuclear copper A center (CU(A)) of subunit 2 and heme A of subunit 1 to the active site in subunit 1, a binuclear center (BNC) formed by heme A3 and copper B (CU(B)). The BNC reduces molecular oxygen to 2 water molecules using 4 electrons from cytochrome c in the IMS and 4 protons from the mitochondrial matrix. This is Cytochrome c oxidase subunit 2 (MT-CO2) from Uromys caudimaculatus (Giant white-tailed rat).